The following is a 458-amino-acid chain: Transmembrane protein adipocyte-associated 1 homolog (458 aa).

N-linked (GlcNAc...) asparagine glycans are attached at residues Asn21 and Asn45. 7 helical membrane passes run Val81–Ile101, Ala114–Met134, Ile152–Phe172, Ile181–Ile201, Phe225–Leu245, Leu263–Ile283, and Leu291–Phe311. N-linked (GlcNAc...) asparagine glycans are attached at residues Asn323 and Asn324. The interval Arg409–Met458 is disordered. Over residues Gly411 to Met422 the composition is skewed to basic and acidic residues.

Belongs to the UPF0359 family.

It localises to the membrane. In Caenorhabditis elegans, this protein is Transmembrane protein adipocyte-associated 1 homolog (tpra-1).